Here is a 251-residue protein sequence, read N- to C-terminus: MLAKRIIPCLDVRDGRVVKGINFEGLRDAGSILEQARFYNNEMADELVFLDISASLESRRTTLEEVLKVSGEVFIPLTVGGGISSVERAHDAFLHGADKVSVNTAAVSEPELISRIAEKFGSQAVVVAIDVKKVDGRYIVHTHSGKKPTEYEAVEWAHKVQELGAGEILLTSMDRDGTQEGYDNEILKMISTTVHIPVIASGGAGNLEHLYRGFTDGHADAALAASIFHFRTYSIRQAKEYLRERGITVRL.

Catalysis depends on residues aspartate 11 and aspartate 130.

This sequence belongs to the HisA/HisF family. In terms of assembly, heterodimer of HisH and HisF.

The protein resides in the cytoplasm. It catalyses the reaction 5-[(5-phospho-1-deoxy-D-ribulos-1-ylimino)methylamino]-1-(5-phospho-beta-D-ribosyl)imidazole-4-carboxamide + L-glutamine = D-erythro-1-(imidazol-4-yl)glycerol 3-phosphate + 5-amino-1-(5-phospho-beta-D-ribosyl)imidazole-4-carboxamide + L-glutamate + H(+). It functions in the pathway amino-acid biosynthesis; L-histidine biosynthesis; L-histidine from 5-phospho-alpha-D-ribose 1-diphosphate: step 5/9. Its function is as follows. IGPS catalyzes the conversion of PRFAR and glutamine to IGP, AICAR and glutamate. The HisF subunit catalyzes the cyclization activity that produces IGP and AICAR from PRFAR using the ammonia provided by the HisH subunit. This is Imidazole glycerol phosphate synthase subunit HisF from Chlorobaculum tepidum (strain ATCC 49652 / DSM 12025 / NBRC 103806 / TLS) (Chlorobium tepidum).